A 503-amino-acid chain; its full sequence is ATP synthase subunit alpha (503 aa).

Residue 170-177 participates in ATP binding; it reads GDRQTGKT.

In terms of assembly, F-type ATPases have 2 components, CF(1) - the catalytic core - and CF(0) - the membrane proton channel. CF(1) has five subunits: alpha(3), beta(3), gamma(1), delta(1), epsilon(1). CF(0) has four main subunits: a(1), b(1), b'(1) and c(9-12).

The protein localises to the cellular thylakoid membrane. It catalyses the reaction ATP + H2O + 4 H(+)(in) = ADP + phosphate + 5 H(+)(out). Its activity is regulated as follows. Inhibited by dicyclohexylcarbodiimide. Its function is as follows. Produces ATP from ADP in the presence of a proton gradient across the membrane. The alpha chain is a regulatory subunit. In terms of biological role, the complex from the organism is particularly stable to disruption and remains functional after 6 hrs at 55 degrees Celsius. The sequence is that of ATP synthase subunit alpha from Thermosynechococcus vestitus (strain NIES-2133 / IAM M-273 / BP-1).